Here is a 248-residue protein sequence, read N- to C-terminus: DNA polymerase sliding clamp (248 aa).

The protein belongs to the PCNA family. In terms of assembly, homotrimer. The subunits circularize to form a toroid; DNA passes through its center. Replication factor C (RFC) is required to load the toroid on the DNA.

Sliding clamp subunit that acts as a moving platform for DNA processing. Responsible for tethering the catalytic subunit of DNA polymerase and other proteins to DNA during high-speed replication. The polypeptide is DNA polymerase sliding clamp (Nitrosopumilus maritimus (strain SCM1)).